Here is a 306-residue protein sequence, read N- to C-terminus: tRNA dimethylallyltransferase (306 aa).

Residue 2–9 coordinates ATP; the sequence is GPTASGKT. Residue 4 to 9 coordinates substrate; sequence TASGKT. 2 interaction with substrate tRNA regions span residues 27–30 and 152–156; these read DSVQ and QRIVR.

This sequence belongs to the IPP transferase family. As to quaternary structure, monomer. Mg(2+) is required as a cofactor.

The enzyme catalyses adenosine(37) in tRNA + dimethylallyl diphosphate = N(6)-dimethylallyladenosine(37) in tRNA + diphosphate. Catalyzes the transfer of a dimethylallyl group onto the adenine at position 37 in tRNAs that read codons beginning with uridine, leading to the formation of N6-(dimethylallyl)adenosine (i(6)A). The chain is tRNA dimethylallyltransferase from Magnetococcus marinus (strain ATCC BAA-1437 / JCM 17883 / MC-1).